A 537-amino-acid chain; its full sequence is Bifunctional purine biosynthesis protein PurH (537 aa).

The MGS-like domain maps to 11-158; it reads ADIQRVRRAL…KNHAYVGVIV (148 aa).

This sequence belongs to the PurH family.

The enzyme catalyses (6R)-10-formyltetrahydrofolate + 5-amino-1-(5-phospho-beta-D-ribosyl)imidazole-4-carboxamide = 5-formamido-1-(5-phospho-D-ribosyl)imidazole-4-carboxamide + (6S)-5,6,7,8-tetrahydrofolate. It catalyses the reaction IMP + H2O = 5-formamido-1-(5-phospho-D-ribosyl)imidazole-4-carboxamide. Its pathway is purine metabolism; IMP biosynthesis via de novo pathway; 5-formamido-1-(5-phospho-D-ribosyl)imidazole-4-carboxamide from 5-amino-1-(5-phospho-D-ribosyl)imidazole-4-carboxamide (10-formyl THF route): step 1/1. It functions in the pathway purine metabolism; IMP biosynthesis via de novo pathway; IMP from 5-formamido-1-(5-phospho-D-ribosyl)imidazole-4-carboxamide: step 1/1. The polypeptide is Bifunctional purine biosynthesis protein PurH (Parvibaculum lavamentivorans (strain DS-1 / DSM 13023 / NCIMB 13966)).